The primary structure comprises 397 residues: Transaldolase (397 aa).

Residue lysine 136 is the Schiff-base intermediate with substrate of the active site.

It belongs to the transaldolase family. Type 1 subfamily. In terms of assembly, homodimer.

It is found in the cytoplasm. The catalysed reaction is D-sedoheptulose 7-phosphate + D-glyceraldehyde 3-phosphate = D-erythrose 4-phosphate + beta-D-fructose 6-phosphate. It functions in the pathway carbohydrate degradation; pentose phosphate pathway; D-glyceraldehyde 3-phosphate and beta-D-fructose 6-phosphate from D-ribose 5-phosphate and D-xylulose 5-phosphate (non-oxidative stage): step 2/3. Functionally, transaldolase is important for the balance of metabolites in the pentose-phosphate pathway. The polypeptide is Transaldolase (Synechococcus sp. (strain ATCC 27144 / PCC 6301 / SAUG 1402/1) (Anacystis nidulans)).